The sequence spans 483 residues: Probable pectate lyase 12 (483 aa).

The signal sequence occupies residues 1–24; that stretch reads MMLQRSCIVLFFSLFLLVPQMVFS. N-linked (GlcNAc...) asparagine glycans are attached at residues N27 and N50. The Ca(2+) site is built by D220, D244, and D248. R300 is a catalytic residue.

The protein belongs to the polysaccharide lyase 1 family. The cofactor is Ca(2+).

It carries out the reaction Eliminative cleavage of (1-&gt;4)-alpha-D-galacturonan to give oligosaccharides with 4-deoxy-alpha-D-galact-4-enuronosyl groups at their non-reducing ends.. Its pathway is glycan metabolism; pectin degradation; 2-dehydro-3-deoxy-D-gluconate from pectin: step 2/5. In Arabidopsis thaliana (Mouse-ear cress), this protein is Probable pectate lyase 12.